Consider the following 434-residue polypeptide: Glutamate-1-semialdehyde 2,1-aminomutase (434 aa).

Lysine 265 carries the post-translational modification N6-(pyridoxal phosphate)lysine.

This sequence belongs to the class-III pyridoxal-phosphate-dependent aminotransferase family. HemL subfamily. In terms of assembly, homodimer. Pyridoxal 5'-phosphate serves as cofactor.

The protein resides in the cytoplasm. The enzyme catalyses (S)-4-amino-5-oxopentanoate = 5-aminolevulinate. Its pathway is porphyrin-containing compound metabolism; protoporphyrin-IX biosynthesis; 5-aminolevulinate from L-glutamyl-tRNA(Glu): step 2/2. The chain is Glutamate-1-semialdehyde 2,1-aminomutase from Ruminiclostridium cellulolyticum (strain ATCC 35319 / DSM 5812 / JCM 6584 / H10) (Clostridium cellulolyticum).